The primary structure comprises 429 residues: Methanol:N,N-dimethyl-4-nitrosoaniline oxidoreductase (429 aa).

The protein belongs to the iron-containing alcohol dehydrogenase family. Homodecamer. It depends on Mg(2+) as a cofactor. The cofactor is Zn(2+). NADPH serves as cofactor.

The enzyme catalyses methanol + A = formaldehyde + AH2. Inhibited by azide and hydrazine. Catalyzes the oxidation of methanol to yield formaldehyde. While the in vivo electron acceptor is not known, N,N-dimethyl-4-nitrosoaniline (NDMA) can serve this function in vitro and is reduced to 4-(hydroxylamino)-N,N-dimethylaniline. It can also use various other primary alcohols, polyols and formaldehyde. In addition, MNO is able to produce methylformate from methanol plus formaldehyde, and possesses a formaldehyde dismutase and a NADH-dependent formaldehyde reductase activity. The protein is Methanol:N,N-dimethyl-4-nitrosoaniline oxidoreductase (mno) of Amycolatopsis methanolica.